The sequence spans 93 residues: Conotoxin Mr105 (93 aa).

The first 22 residues, methionine 1 to alanine 22, serve as a signal peptide directing secretion. A propeptide spanning residues glutamate 23–arginine 33 is cleaved from the precursor.

This sequence belongs to the F superfamily. In terms of processing, contains 4 disulfide bonds. Expressed by the venom duct.

It localises to the secreted. In Conus marmoreus (Marble cone), this protein is Conotoxin Mr105.